The primary structure comprises 213 residues: Small ribosomal subunit protein uS5 (213 aa).

The region spanning Leu54–Val117 is the S5 DRBM domain.

It belongs to the universal ribosomal protein uS5 family. In terms of assembly, part of the 30S ribosomal subunit. Contacts protein S4.

In terms of biological role, with S4 and S12 plays an important role in translational accuracy. In Hyperthermus butylicus (strain DSM 5456 / JCM 9403 / PLM1-5), this protein is Small ribosomal subunit protein uS5.